The primary structure comprises 39 residues: MQVNENPNKVPVELNRTSLYLGLLSVLVLGILFSSYFFN.

The helical transmembrane segment at 18 to 38 threads the bilayer; it reads SLYLGLLSVLVLGILFSSYFF.

The protein belongs to the PsbL family. As to quaternary structure, PSII is composed of 1 copy each of membrane proteins PsbA, PsbB, PsbC, PsbD, PsbE, PsbF, PsbH, PsbI, PsbJ, PsbK, PsbL, PsbM, PsbT, PsbX, PsbY, Psb30/Ycf12, peripheral proteins PsbO, CyanoQ (PsbQ), PsbU, PsbV and a large number of cofactors. It forms dimeric complexes.

The protein resides in the cellular thylakoid membrane. Functionally, one of the components of the core complex of photosystem II (PSII). PSII is a light-driven water:plastoquinone oxidoreductase that uses light energy to abstract electrons from H(2)O, generating O(2) and a proton gradient subsequently used for ATP formation. It consists of a core antenna complex that captures photons, and an electron transfer chain that converts photonic excitation into a charge separation. This subunit is found at the monomer-monomer interface and is required for correct PSII assembly and/or dimerization. This Prochlorococcus marinus subsp. pastoris (strain CCMP1986 / NIES-2087 / MED4) protein is Photosystem II reaction center protein L.